The following is a 321-amino-acid chain: MTIAKDYRTIYRNQIKKQIRLNQEHLQSLTHLGSQINFEVDPPKLPDPDPARKVFFFDIDNTLYRKSTKVQLLMQQSLSNFFKYELGFDDDEAERLIESYYQEYGLSVKGLIKNKQIDDVLQYNTFIDDSLPLQDYLKPDWKLRELLINLKKKKLGKFDKLWLFTNSYKNHAIRCVKILGIADLFDGITYCHYDRPIEEEFICKPDPKFFETAKLQSGLSSFANAWFIDDNESNVRSALSMGMGHVIHLIEDYQYESENIVTKDHKNKQQFSILKDILEIPLIMDVEVYRPSSIAIKEMEELEEEGEAVNWSNQQINVQSS.

Belongs to the SSM1 family.

Its function is as follows. May be involved in phosphate metabolism. The polypeptide is Phosphate metabolism protein 8 (PHM8) (Saccharomyces cerevisiae (strain ATCC 204508 / S288c) (Baker's yeast)).